We begin with the raw amino-acid sequence, 338 residues long: MNDEDQKILDAKPIADEIDSELTLRPKYLREYIGQKEIKDQLSVYLKAAKQRDEALDHVLLFGPPGLGKTTLAIVIANEMGAKIKTTSGPAIEKTGDLVALLNELTAGDILFIDEIHRLPKSVEEVLYSAMEDFYVDIVVGQGETAHAIHFPLPPFTLIGATTRAGMLSAPLRDRFGIVAHMQFYPVSDLKLIAKRTAEIFDTSIAGSGAAELALRSRGTPRIVNRLLKRVRDFAQVAGKDTIDEQIVDNALNKLHVDARGLDETDLKYLNTLIHQYKGGPAGVNALASNIGEDSETVEEMVEPYLLQIGFIQRTPRGRQATQAAYEHLQIPYQTGLS.

A large ATPase domain (RuvB-L) region spans residues E4–Y185. ATP is bound by residues L24, R25, G66, K69, T70, T71, E132 to F134, R175, Y185, and R222. Position 70 (T70) interacts with Mg(2+). Positions P186–H256 are small ATPAse domain (RuvB-S). The tract at residues A259 to S338 is head domain (RuvB-H). 2 residues coordinate DNA: R314 and R319.

This sequence belongs to the RuvB family. In terms of assembly, homohexamer. Forms an RuvA(8)-RuvB(12)-Holliday junction (HJ) complex. HJ DNA is sandwiched between 2 RuvA tetramers; dsDNA enters through RuvA and exits via RuvB. An RuvB hexamer assembles on each DNA strand where it exits the tetramer. Each RuvB hexamer is contacted by two RuvA subunits (via domain III) on 2 adjacent RuvB subunits; this complex drives branch migration. In the full resolvosome a probable DNA-RuvA(4)-RuvB(12)-RuvC(2) complex forms which resolves the HJ.

The protein localises to the cytoplasm. The enzyme catalyses ATP + H2O = ADP + phosphate + H(+). In terms of biological role, the RuvA-RuvB-RuvC complex processes Holliday junction (HJ) DNA during genetic recombination and DNA repair, while the RuvA-RuvB complex plays an important role in the rescue of blocked DNA replication forks via replication fork reversal (RFR). RuvA specifically binds to HJ cruciform DNA, conferring on it an open structure. The RuvB hexamer acts as an ATP-dependent pump, pulling dsDNA into and through the RuvAB complex. RuvB forms 2 homohexamers on either side of HJ DNA bound by 1 or 2 RuvA tetramers; 4 subunits per hexamer contact DNA at a time. Coordinated motions by a converter formed by DNA-disengaged RuvB subunits stimulates ATP hydrolysis and nucleotide exchange. Immobilization of the converter enables RuvB to convert the ATP-contained energy into a lever motion, pulling 2 nucleotides of DNA out of the RuvA tetramer per ATP hydrolyzed, thus driving DNA branch migration. The RuvB motors rotate together with the DNA substrate, which together with the progressing nucleotide cycle form the mechanistic basis for DNA recombination by continuous HJ branch migration. Branch migration allows RuvC to scan DNA until it finds its consensus sequence, where it cleaves and resolves cruciform DNA. This Oenococcus oeni (strain ATCC BAA-331 / PSU-1) protein is Holliday junction branch migration complex subunit RuvB.